We begin with the raw amino-acid sequence, 78 residues long: MQKEVTKPIEIPANISLNNLQDLFPPHFGNEEADEDDEDGDKYGDDDGEFYGDNDGDNDGDNDGVNDGVGDGPPSTLL.

Positions 20–78 (LQDLFPPHFGNEEADEDDEDGDKYGDDDGEFYGDNDGDNDGDNDGVNDGVGDGPPSTLL) are disordered. Residues 31–64 (EEADEDDEDGDKYGDDDGEFYGDNDGDNDGDNDG) are compositionally biased toward acidic residues.

This is an uncharacterized protein from Dictyostelium discoideum (Social amoeba).